A 436-amino-acid chain; its full sequence is Na(+)/H(+) antiporter NhaA 2 (436 aa).

The next 11 membrane-spanning stretches (helical) occupy residues 35 to 55 (FGGG…NSPW), 80 to 100 (LATW…GLEL), 116 to 136 (ALPV…YVGI), 147 to 167 (GWAI…AVIG), 176 to 196 (AFLL…IAIF), 201 to 221 (FKLT…LLVQ), 226 to 246 (WWWA…ESGV), 283 to 303 (VSAG…SLRG), 313 to 333 (PIVV…IFGS), 354 to 374 (LLGV…IGEL), and 385 to 405 (VKAA…AVLS).

It belongs to the NhaA Na(+)/H(+) (TC 2.A.33) antiporter family.

Its subcellular location is the cell membrane. It carries out the reaction Na(+)(in) + 2 H(+)(out) = Na(+)(out) + 2 H(+)(in). In terms of biological role, na(+)/H(+) antiporter that extrudes sodium in exchange for external protons. The polypeptide is Na(+)/H(+) antiporter NhaA 2 (Salinispora arenicola (strain CNS-205)).